Reading from the N-terminus, the 285-residue chain is Nurim (285 aa).

The Nuclear segment spans residues 1-16; it reads MSANVQVSGQLSSGPS. The chain crosses the membrane as a helical span at residues 17-44; that stretch reads LPACIVLSAVSLLCFVAGFGTGAEFVRF. The Perinuclear space portion of the chain corresponds to 45–74; the sequence is LSFGAIFRNISGGLDGEIPLTWSEAIRNTQ. Residues 75–96 traverse the membrane as a helical segment; that stretch reads FQCCIGIDIGLLFLFVLQHSLM. The Nuclear portion of the chain corresponds to 97–113; sequence AWTAVKKNVLHVFGVLQ. A helical membrane pass occupies residues 114-130; it reads RSIYILCTALSLQVLMR. The Perinuclear space segment spans residues 131 to 149; it reads FWQPCPHGPYLWNVSSDPW. Residues 150-180 traverse the membrane as a helical segment; the sequence is SAWLPLLCALVHTISWLLIFSVLLIFDYAEL. Residues 181–207 lie on the Nuclear side of the membrane; it reads MGIKQVYYFCLGMGDPLSHKSPRVARL. Residues 208 to 226 traverse the membrane as a helical segment; sequence YAHLRHPIYLELLLILWAV. Over 227 to 232 the chain is Perinuclear space; the sequence is PCLPPD. Residues 233–250 form a helical membrane-spanning segment; the sequence is RLILAIFFTLYLSLVHRL. Residues 251–285 are Nuclear-facing; it reads DVQDYAYLRSQLEKKFLLFSREEASAVGGQIRKNN.

This sequence belongs to the nurim family.

It is found in the nucleus inner membrane. In Xenopus laevis (African clawed frog), this protein is Nurim (nrm).